A 37-amino-acid chain; its full sequence is Large ribosomal subunit protein bL36c (37 aa).

It belongs to the bacterial ribosomal protein bL36 family.

Its subcellular location is the plastid. It is found in the chloroplast. This is Large ribosomal subunit protein bL36c from Gracilaria tenuistipitata var. liui (Red alga).